An 874-amino-acid polypeptide reads, in one-letter code: DNA mismatch repair protein MutS (874 aa).

Basic and acidic residues predominate over residues 1–12; the sequence is MSNDRPLTHSEA. The interval 1–20 is disordered; the sequence is MSNDRPLTHSEAESSALRLG. 661–668 contacts ATP; it reads GPNASGKS. The interval 854-874 is disordered; it reads RKSSMGDPPTAPEINQGELPF.

This sequence belongs to the DNA mismatch repair MutS family.

Its function is as follows. This protein is involved in the repair of mismatches in DNA. It is possible that it carries out the mismatch recognition step. This protein has a weak ATPase activity. In Thermosynechococcus vestitus (strain NIES-2133 / IAM M-273 / BP-1), this protein is DNA mismatch repair protein MutS.